Reading from the N-terminus, the 451-residue chain is Nicotinamide phosphoribosyltransferase (451 aa).

Arg-209 lines the diphosphate pocket. Residue Asp-232 participates in beta-nicotinamide D-ribonucleotide binding. Diphosphate contacts are provided by His-248 and Arg-309. Residues 309-311 (RPD), 364-365 (GD), and Arg-403 each bind beta-nicotinamide D-ribonucleotide.

This sequence belongs to the NAPRTase family.

It catalyses the reaction beta-nicotinamide D-ribonucleotide + diphosphate = 5-phospho-alpha-D-ribose 1-diphosphate + nicotinamide + H(+). Its pathway is cofactor biosynthesis; NAD(+) biosynthesis; nicotinamide D-ribonucleotide from 5-phospho-alpha-D-ribose 1-diphosphate and nicotinamide: step 1/1. Functionally, catalyzes the condensation of nicotinamide with 5-phosphoribosyl-1-pyrophosphate to yield nicotinamide mononucleotide, an intermediate in the biosynthesis of NAD. This Mycoplasma pneumoniae (strain ATCC 29342 / M129 / Subtype 1) (Mycoplasmoides pneumoniae) protein is Nicotinamide phosphoribosyltransferase.